The chain runs to 671 residues: Probable ATP-dependent RNA helicase ddx41 (671 aa).

Coiled coils occupy residues 19–43 (IPLK…QPQQ) and 100–154 (LDQK…DMEE). Low complexity-rich tracts occupy residues 33 to 83 (LNNL…NNDN) and 125 to 139 (IEND…NNNG). Disordered regions lie at residues 33–88 (LNNL…FEDE) and 125–148 (IEND…KEEK). The short motif at 222–250 (TTFKEMKIPKPVIDVLLEKGIKKPSPIQV) is the Q motif element. The region spanning 253-438 (LPVILSGRDM…RSALVLPVEV (186 aa)) is the Helicase ATP-binding domain. 266–273 (AYTGSGKT) contacts ATP. The DEAD box signature appears at 386–389 (DEAD). The 161-residue stretch at 449-609 (NVTQEVEFVK…KVPPALLEIP (161 aa)) folds into the Helicase C-terminal domain. Residues 617-636 (KLQDRNGNTGGGADDDDTKP) form a disordered region. The CCHC-type zinc finger occupies 635–652 (KPCEYCDGRGHRLVNCPK).

Belongs to the DEAD box helicase family. DDX41 subfamily.

It is found in the nucleus. The enzyme catalyses ATP + H2O = ADP + phosphate + H(+). This chain is Probable ATP-dependent RNA helicase ddx41 (ddx41), found in Dictyostelium discoideum (Social amoeba).